Consider the following 242-residue polypeptide: MVEPMNQSSVFQPPDRQRVDERIATTIADAILDGVFPPGSTLPPERDLAERLGVNRTSLRQGLARLQQMGLIEVRHGSGSVVRDPEGLTHPAVVEALVRKLGPDFLVELLEIRAALGPLIGRLAAARSTPEDAEALCAALEVVQQADTAAARQAADLAYFRVLIHSTRNRALGLLYRWVEHAFGGREHALTGAYDDADPVLTDLRAINGAVLAGDPAAAAATVEAYLNASALRMVKSYRDRA.

The HTH gntR-type domain maps to 17–85; that stretch reads QRVDERIATT…HGSGSVVRDP (69 aa). Positions 45–64 form a DNA-binding region, H-T-H motif; that stretch reads ERDLAERLGVNRTSLRQGLA.

This is an uncharacterized protein from Mycobacterium tuberculosis (strain ATCC 25618 / H37Rv).